We begin with the raw amino-acid sequence, 541 residues long: Chaperonin GroEL (541 aa).

Residues 29–32 (TLGP), 86–90 (DGTTT), Gly-413, 476–478 (NAA), and Asp-492 contribute to the ATP site.

The protein belongs to the chaperonin (HSP60) family. In terms of assembly, forms a cylinder of 14 subunits composed of two heptameric rings stacked back-to-back. Interacts with the co-chaperonin GroES.

The protein resides in the cytoplasm. The catalysed reaction is ATP + H2O + a folded polypeptide = ADP + phosphate + an unfolded polypeptide.. Together with its co-chaperonin GroES, plays an essential role in assisting protein folding. The GroEL-GroES system forms a nano-cage that allows encapsulation of the non-native substrate proteins and provides a physical environment optimized to promote and accelerate protein folding. The sequence is that of Chaperonin GroEL from Streptococcus equi subsp. zooepidemicus (strain H70).